A 249-amino-acid polypeptide reads, in one-letter code: MAAAATGGRATSQPKKTTKGLTPRQKKILETIQRSVNVNGYPPSMREIGDTVGLASLSSVTHQLSQLEKLGYLRRDPKRPRAMEVLMPLTLDGGATGRTARQAAEPAAAAAPGITASVTELPTALDTAMVPLVGRIAAGGPILADQVVEDVMPLPRQLVGQGELFMLKVAGDSMVDAAICDGDWVVVRRQADAANGDIVAALLDDEATVKTFRQRDGHTWLLPQNTQYEPILGDHATIMGKVVSVLRSL.

The tract at residues 1–25 (MAAAATGGRATSQPKKTTKGLTPRQ) is disordered. The segment at residues 45 to 65 (MREIGDTVGLASLSSVTHQLS) is a DNA-binding region (H-T-H motif). Catalysis depends on for autocatalytic cleavage activity residues S173 and K210.

This sequence belongs to the peptidase S24 family. In terms of assembly, homodimer.

It carries out the reaction Hydrolysis of Ala-|-Gly bond in repressor LexA.. In terms of biological role, represses a number of genes involved in the response to DNA damage (SOS response), including recA and lexA. In the presence of single-stranded DNA, RecA interacts with LexA causing an autocatalytic cleavage which disrupts the DNA-binding part of LexA, leading to derepression of the SOS regulon and eventually DNA repair. The polypeptide is LexA repressor (Pseudarthrobacter chlorophenolicus (strain ATCC 700700 / DSM 12829 / CIP 107037 / JCM 12360 / KCTC 9906 / NCIMB 13794 / A6) (Arthrobacter chlorophenolicus)).